The primary structure comprises 249 residues: MEFARGQNLRKRTFSDMNISYKNIGIHPNSLPKNNLSRKILFKGKISKNSIPKDSLTNGKSSKNCMSKNDLAKDNSPKKGLIGKKRSAPLDISFQSMNSSMSSSTQKKTRILDEKNKDQSSSNENDRDSPVIVDITLKPSYTSKISRITEIIHKMKELNINRIEDGLSFNKKRNEHDAKNILLHTMEMVEEDCEEEEDVIIENPYLNASLSEDDTDSIVGTDYSEEEKESISETESSSDGECYSLYDSF.

A compositionally biased stretch (polar residues) spans 51–67 (IPKDSLTNGKSSKNCMS). Disordered regions lie at residues 51 to 131 (IPKD…DSPV) and 205 to 240 (YLNA…SSDG). A compositionally biased stretch (low complexity) spans 93–106 (SFQSMNSSMSSSTQ). Over residues 110–129 (RILDEKNKDQSSSNENDRDS) the composition is skewed to basic and acidic residues.

It belongs to the asfivirus DP238L family.

This is an uncharacterized protein from African swine fever virus (isolate Tick/Malawi/Lil 20-1/1983) (ASFV).